We begin with the raw amino-acid sequence, 268 residues long: Putative type I specificity subunit S.MpnORF365P (268 aa).

The protein belongs to the type-I restriction system S methylase family. As to quaternary structure, the methyltransferase is composed of M and S polypeptides.

Functionally, the specificity (S) subunit of a type I methyltransferase (MTase); this subunit dictates DNA sequence specificity. The single R subunit has multiple frameshifts and is probably not expressed. The chain is Putative type I specificity subunit S.MpnORF365P from Mycoplasma pneumoniae (strain ATCC 29342 / M129 / Subtype 1) (Mycoplasmoides pneumoniae).